We begin with the raw amino-acid sequence, 76 residues long: Exodeoxyribonuclease 7 small subunit (76 aa).

This sequence belongs to the XseB family. In terms of assembly, heterooligomer composed of large and small subunits.

The protein localises to the cytoplasm. It carries out the reaction Exonucleolytic cleavage in either 5'- to 3'- or 3'- to 5'-direction to yield nucleoside 5'-phosphates.. Bidirectionally degrades single-stranded DNA into large acid-insoluble oligonucleotides, which are then degraded further into small acid-soluble oligonucleotides. The sequence is that of Exodeoxyribonuclease 7 small subunit from Latilactobacillus sakei subsp. sakei (strain 23K) (Lactobacillus sakei subsp. sakei).